The chain runs to 62 residues: Amolopin-P1 (62 aa).

The N-terminal stretch at 1–22 is a signal peptide; it reads MFPMKKSLLLLFFFGPISLSFC. The propeptide occupies 23-44; that stretch reads DQERGADEEENGGEVTEQEVKR.

Expressed by the skin glands.

Its subcellular location is the secreted. In terms of biological role, antimicrobial peptide with activity against Gram-positive bacteria. Has been tested against S.aureus (MIC=37.5 ug/mL), against B.pumilus (MIC=75.0 ug/mL), B.cereus (no activity detected). Does not show activity against Gram-negative bacteria (E.coli, B.dysenteriae, A.calcoaceticus, P.aeruginosa) and fungi (C.albicans). Does not show hemolytic activity against rabbit erythrocytes. This chain is Amolopin-P1, found in Amolops loloensis (Lolokou Sucker Frog).